A 536-amino-acid chain; its full sequence is Light-independent protochlorophyllide reductase subunit B (536 aa).

Asp-36 is a binding site for [4Fe-4S] cluster. Catalysis depends on Asp-274, which acts as the Proton donor. Residue 409–410 participates in substrate binding; that stretch reads GL. Residues 426–448 are disordered; the sequence is DEAGPSHHGGKAVPASAPRADEA.

It belongs to the ChlB/BchB/BchZ family. As to quaternary structure, protochlorophyllide reductase is composed of three subunits; BchL, BchN and BchB. Forms a heterotetramer of two BchB and two BchN subunits. [4Fe-4S] cluster serves as cofactor.

It catalyses the reaction chlorophyllide a + oxidized 2[4Fe-4S]-[ferredoxin] + 2 ADP + 2 phosphate = protochlorophyllide a + reduced 2[4Fe-4S]-[ferredoxin] + 2 ATP + 2 H2O. It functions in the pathway porphyrin-containing compound metabolism; bacteriochlorophyll biosynthesis (light-independent). Component of the dark-operative protochlorophyllide reductase (DPOR) that uses Mg-ATP and reduced ferredoxin to reduce ring D of protochlorophyllide (Pchlide) to form chlorophyllide a (Chlide). This reaction is light-independent. The NB-protein (BchN-BchB) is the catalytic component of the complex. The protein is Light-independent protochlorophyllide reductase subunit B of Cereibacter sphaeroides (strain KD131 / KCTC 12085) (Rhodobacter sphaeroides).